We begin with the raw amino-acid sequence, 1371 residues long: uncharacterized protein (1371 aa).

Positions 1020 to 1048 (WYLSSSKNTPEPRPDPEPTPEGHDNNLRP) are disordered. The span at 1029–1046 (PEPRPDPEPTPEGHDNNL) shows a compositional bias: basic and acidic residues. The Autotransporter domain occupies 1083 to 1371 (GEPKATSMWM…SAMLGVKYTF (289 aa)).

The protein resides in the cell outer membrane. This is an uncharacterized protein from Escherichia coli (strain K12).